We begin with the raw amino-acid sequence, 546 residues long: MAAKDVKFGRTAREKMLRGVDILADAVKVTLGPKGRNVVIDKSFGAPRITKDGVSVAKEVELEDKFENMGAQMLREVASKTNDTAGDGTTTATVLGQAIVQEGAKAVAAGMNPMDLKRGIDLAVNEVVAELLKKAKKINTSEEVAQVGTISANGEAEIGKMIAEAMQKVGNEGVITVEEAKTAETELEVVEGMQFDRGYLSPYFVTNPEKMVADLEDAYILLHEKKLSNLQALLPVLEAVVQTSKPLLIIAEDVEGEALATLVVNKLRGGLKIAAVKAPGFGDRRKAMLEDIAILTGGQVISEDLGIKLESVTLDMLGRAKKVSISKENTTIVDGAGQKAEIDARVGQIKQQIEETTSDYDREKLQERLAKLAGGVAVIRVGGATEVEVKEKKDRVDDALNATRAAVEEGIVAGGGTALLRASTKITAKGVNADQEAGINIVRRAIQAPARQITTNAGEEASVIVGKILENTSETFGYNTANGEYGDLISLGIVDPVKVVRTALQNAASVAGLLITTEAMIAELPKKDAAPAGMPGGMGGMGGMDF.

ATP-binding positions include 30 to 33 (TLGP), Lys51, 87 to 91 (DGTTT), Gly415, and Asp495.

It belongs to the chaperonin (HSP60) family. In terms of assembly, forms a cylinder of 14 subunits composed of two heptameric rings stacked back-to-back. Interacts with the co-chaperonin GroES.

It localises to the cytoplasm. It carries out the reaction ATP + H2O + a folded polypeptide = ADP + phosphate + an unfolded polypeptide.. Together with its co-chaperonin GroES, plays an essential role in assisting protein folding. The GroEL-GroES system forms a nano-cage that allows encapsulation of the non-native substrate proteins and provides a physical environment optimized to promote and accelerate protein folding. The chain is Chaperonin GroEL from Brucella suis (strain ATCC 23445 / NCTC 10510).